The primary structure comprises 404 residues: Ubiquitin-like modifier-activating enzyme 5 (404 aa).

5 residues coordinate ATP: glycine 83, aspartate 104, lysine 127, asparagine 150, and asparagine 184. Zn(2+) contacts are provided by cysteine 226 and cysteine 229. The active-site Glycyl thioester intermediate is cysteine 250. The Zn(2+) site is built by cysteine 303 and cysteine 308. The tract at residues 372 to 393 (APEKSSETSEETVTAATADETS) is disordered. The span at 382–391 (ETVTAATADE) shows a compositional bias: low complexity.

This sequence belongs to the ubiquitin-activating E1 family. UBA5 subfamily.

E1-like enzyme which activates UFM1. The polypeptide is Ubiquitin-like modifier-activating enzyme 5 (Drosophila sechellia (Fruit fly)).